The sequence spans 1002 residues: Carboxypeptidase Y (1002 aa).

Positions 1–18 (MLMKQTFLYFLLTCVVSA) are cleaved as a signal peptide. A propeptide spanning residues 19 to 521 (QFNGYVPPEQ…AYLEMLKAEG (503 aa)) is cleaved from the precursor. Disordered stretches follow at residues 51 to 91 (QEES…TALE), 124 to 436 (DEDE…NMQS), and 527 to 546 (AFRD…ADSS). 2 stretches are compositionally biased toward basic and acidic residues: residues 63–81 (PERD…HEFN) and 127–143 (EHVR…EDAP). The span at 144–170 (RRKHGKCKGKGKHHKGKHAKGKGKKSH) shows a compositional bias: basic residues. The segment covering 171–205 (PKPEDDSVFFDDERPKHHEFDDEDREFPAHHEPGE) has biased composition (basic and acidic residues). Repeat copies occupy residues 225-237 (MHHE…PPPP), 238-250 (MHHE…PPPP), 251-263 (MHHE…PPPP), 264-276 (MHHE…PPPP), 277-289 (MHHE…PPPP), 290-302 (MHHE…PPPP), 303-315 (MHHE…PPPP), 316-328 (MHHE…PPPP), 329-341 (MHHE…PPPP), 361-369 (DKEHHKGPK), 370-378 (DKEHHKGPK), 379-387 (DKEHHKGPK), 388-396 (DKEHHKGPK), 397-405 (DKEHHKGPK), and 406-414 (DKEHHKGPK). The interval 225-341 (MHHEPGEHMP…EPGEHMPPPP (117 aa)) is 9 X 13 AA tandem repeats of M-H-H-E-P-G-E-H-M-P-P-P-P. The span at 343 to 431 (KHHELEEHEG…PKEKHNERPE (89 aa)) shows a compositional bias: basic and acidic residues. Residues 361–423 (DKEHHKGPKD…KDKEHHQGPK (63 aa)) form a 7 X 9 AA tandem repeats of D-K-E-H-H-K-G-P-K region. The 2-7; approximate repeat unit spans residues 415–423 (DKEHHQGPK). 5 disulfide bridges follow: Cys627–Cys880, Cys776–Cys789, Cys799–Cys822, Cys806–Cys815, and Cys844–Cys851. The N-linked (GlcNAc...) asparagine glycan is linked to Asn659. Ser715 is an active-site residue. The active site involves Asp921. A substrate-binding site is contributed by Cys924. Residue His978 is part of the active site. Met979 lines the substrate pocket.

This sequence belongs to the peptidase S10 family. In terms of assembly, heterodimer of two subunits of 32 kDa and 19 kDa derived from the precursor protein and linked by a disulfide bond.

It is found in the vacuole. The catalysed reaction is Release of a C-terminal amino acid with broad specificity.. Involved in degradation of small peptides. Digests preferentially peptides containing an aliphatic or hydrophobic residue in P1' position, as well as methionine, leucine or phenylalanine in P1 position of ester substrate. The chain is Carboxypeptidase Y (cpy1) from Schizosaccharomyces pombe (strain 972 / ATCC 24843) (Fission yeast).